A 198-amino-acid chain; its full sequence is Virion infectivity factor (198 aa).

The tract at residues 76–115 (GERPWHLGHGIGLEWRQGKYSTQIDPETADQLIHTRYFTC) is RNA-binding. Phosphothreonine; by host MAP4K1 is present on T97. The short motif at 109–140 (HTRYFTCFAAGAVRQAILGERILTFCHFQSGH) is the HCCH motif element. At T145 the chain carries Phosphothreonine; by host. The BC-box-like motif signature appears at 145–154 (TLQFLAFRKV). A multimerization region spans residues 152–170 (RKVVESQDKQPKGPRRPLP). A disordered region spans residues 159–198 (DKQPKGPRRPLPSVTKLTEDRWNKHRTTTGRRENHTLSGC). S171 is modified (phosphoserine; by host MAP4K1). A membrane association region spans residues 177-178 (ED). Over residues 188 to 198 (GRRENHTLSGC) the composition is skewed to basic and acidic residues.

The protein belongs to the primate lentivirus group Vif protein family. Homomultimer; in vitro and presumably in vivo. Interacts with viral Pr55Gag precursor, host APOBEC3G, UBCE7IP1 isoform 3/ZIN, ABCE1 and possibly with SAT. Forms an E3 ligase complex by interacting with host CUL5 and elongin BC complex (ELOB and ELOC). Highly phosphorylated on serine and threonine residues. Thr-97 and Ser-171 are phosphorylated by the mitogen activated kinase MAP4K1. In terms of processing, polyubiquitinated and degraded by the proteasome in the presence of APOBEC3G.

Its subcellular location is the host cytoplasm. The protein localises to the host cell membrane. It localises to the virion. In terms of biological role, counteracts the innate antiviral activity of APOBEC3G. Forms a complex with host APOBEC3G thus preventing the entry of this lethally hypermutating enzyme into progeny virions. Functions as an adapter molecule, recruiting APOBEC3G to the ubiquitin-proteasome machinery. Targets APOBEC3G for degradation through the assembly with elongin BC complex, CUL5 and RBX1. Binds viral RNA and affects the stability of viral nucleoprotein core. May play a role in viral morphology. Interacts with host ABCE1, which seems to be involved in lentiviruses capsid formation and displays RNase L inhibitor activity. This interaction may play a role in protecting viral RNA from damage during viral assembly. May interact with host SAT, which is a regulator of polyamine cell level. This interaction may be relevant since polyamines affect viral RNA properties. The sequence is that of Virion infectivity factor from Pan troglodytes (Chimpanzee).